A 291-amino-acid chain; its full sequence is tRNA U34 carboxymethyltransferase (291 aa).

Residues Lys61, Trp75, Lys80, Gly100, 122–124 (DPS), 149–150 (VE), Tyr169, and Arg284 contribute to the carboxy-S-adenosyl-L-methionine site.

Belongs to the class I-like SAM-binding methyltransferase superfamily. CmoB family. In terms of assembly, homotetramer.

The enzyme catalyses carboxy-S-adenosyl-L-methionine + 5-hydroxyuridine(34) in tRNA = 5-carboxymethoxyuridine(34) in tRNA + S-adenosyl-L-homocysteine + H(+). Functionally, catalyzes carboxymethyl transfer from carboxy-S-adenosyl-L-methionine (Cx-SAM) to 5-hydroxyuridine (ho5U) to form 5-carboxymethoxyuridine (cmo5U) at position 34 in tRNAs. In Campylobacter jejuni subsp. jejuni serotype O:23/36 (strain 81-176), this protein is tRNA U34 carboxymethyltransferase.